The chain runs to 659 residues: Interferon-induced GTP-binding protein Mx3 (659 aa).

Positions 65–338 (DLALPAIAVI…LISHICKSLP (274 aa)) constitute a Dynamin-type G domain. The G1 motif stretch occupies residues 75 to 82 (GDQSSGKS). 75–82 (GDQSSGKS) serves as a coordination point for GTP. Residues 100 to 102 (VTR) form a G2 motif region. A G3 motif region spans residues 176–179 (DLPG). GTP-binding positions include 176-180 (DLPGI) and 245-248 (TKPD). Residues 245–248 (TKPD) are G4 motif. Residues 277–280 (KCRG) form a G5 motif region. Positions 547-568 (EAEEEERKHGKSRSAQSPNLQT) are disordered. A compositionally biased stretch (polar residues) spans 559 to 568 (RSAQSPNLQT). Positions 571-659 (MDEIFQHLNA…AQRRLAKFPG (89 aa)) constitute a GED domain.

The protein belongs to the TRAFAC class dynamin-like GTPase superfamily. Dynamin/Fzo/YdjA family.

The protein localises to the cytoplasm. Does not show activity against influenza virus or VSV; although it only differs from Mx2 by 8 positions. The chain is Interferon-induced GTP-binding protein Mx3 (Mx3) from Rattus norvegicus (Rat).